The sequence spans 261 residues: Protein unc-50 homolog (261 aa).

The next 6 membrane-spanning stretches (helical) occupy residues 37–57, 82–102, 113–133, 166–186, 190–210, and 225–245; these read IFHY…YLCF, AFAV…AITF, VMFW…ATIG, SFFP…PILL, LFAA…YYYV, and VVFL…VVMG.

The protein belongs to the unc-50 family.

The protein resides in the membrane. The chain is Protein unc-50 homolog from Dictyostelium discoideum (Social amoeba).